The following is a 95-amino-acid chain: MAKYEILYIIRPNIEEEAKNALVARFDSILSDNGATVVESKDWEKRRLAYEIQDFTEGLYHIVNVEAEDAVALNEFDRLSKINGDILRHMIVKVD.

This sequence belongs to the bacterial ribosomal protein bS6 family.

Its function is as follows. Binds together with bS18 to 16S ribosomal RNA. The protein is Small ribosomal subunit protein bS6 of Streptococcus agalactiae serotype Ia (strain ATCC 27591 / A909 / CDC SS700).